A 379-amino-acid chain; its full sequence is tRNA-specific 2-thiouridylase MnmA (379 aa).

Residues 23 to 30 and leucine 49 each bind ATP; that span reads AMSGGVDS. Cysteine 117 serves as the catalytic Nucleophile. An intrachain disulfide couples cysteine 117 to cysteine 214. Position 141 (glycine 141) interacts with ATP. The tract at residues 163-165 is interaction with tRNA; that stretch reads RDQ. Cysteine 214 serves as the catalytic Cysteine persulfide intermediate.

The protein belongs to the MnmA/TRMU family.

It is found in the cytoplasm. The catalysed reaction is S-sulfanyl-L-cysteinyl-[protein] + uridine(34) in tRNA + AH2 + ATP = 2-thiouridine(34) in tRNA + L-cysteinyl-[protein] + A + AMP + diphosphate + H(+). Catalyzes the 2-thiolation of uridine at the wobble position (U34) of tRNA, leading to the formation of s(2)U34. In Cereibacter sphaeroides (strain KD131 / KCTC 12085) (Rhodobacter sphaeroides), this protein is tRNA-specific 2-thiouridylase MnmA.